Consider the following 102-residue polypeptide: Integration host factor subunit beta (102 aa).

This sequence belongs to the bacterial histone-like protein family. In terms of assembly, heterodimer of an alpha and a beta chain.

Functionally, this protein is one of the two subunits of integration host factor, a specific DNA-binding protein that functions in genetic recombination as well as in transcriptional and translational control. The protein is Integration host factor subunit beta of Rhizobium rhizogenes (strain K84 / ATCC BAA-868) (Agrobacterium radiobacter).